The sequence spans 138 residues: Protein FAM136A (138 aa).

Belongs to the FAM136 family.

The polypeptide is Protein FAM136A (fam136a) (Xenopus laevis (African clawed frog)).